Here is a 104-residue protein sequence, read N- to C-terminus: L-rhamnose mutarotase (104 aa).

A substrate-binding site is contributed by Y18. Catalysis depends on H22, which acts as the Proton donor. Residues Y41 and 76-77 (WW) contribute to the substrate site.

This sequence belongs to the rhamnose mutarotase family. As to quaternary structure, homodimer.

It localises to the cytoplasm. It carries out the reaction alpha-L-rhamnose = beta-L-rhamnose. The protein operates within carbohydrate metabolism; L-rhamnose metabolism. In terms of biological role, involved in the anomeric conversion of L-rhamnose. This is L-rhamnose mutarotase from Sinorhizobium fredii (strain NBRC 101917 / NGR234).